The following is a 235-amino-acid chain: Orotidine 5'-phosphate decarboxylase (235 aa).

Residues aspartate 10, lysine 33, 60 to 69 (DLKMSDIPNT), threonine 123, arginine 185, glutamine 194, glycine 214, and arginine 215 contribute to the substrate site. Lysine 62 serves as the catalytic Proton donor.

Belongs to the OMP decarboxylase family. Type 1 subfamily. As to quaternary structure, homodimer.

The enzyme catalyses orotidine 5'-phosphate + H(+) = UMP + CO2. The protein operates within pyrimidine metabolism; UMP biosynthesis via de novo pathway; UMP from orotate: step 2/2. Functionally, catalyzes the decarboxylation of orotidine 5'-monophosphate (OMP) to uridine 5'-monophosphate (UMP). This Lactobacillus gasseri (strain ATCC 33323 / DSM 20243 / BCRC 14619 / CIP 102991 / JCM 1131 / KCTC 3163 / NCIMB 11718 / NCTC 13722 / AM63) protein is Orotidine 5'-phosphate decarboxylase.